The sequence spans 329 residues: Strigolactones hydrolase CXE15 (329 aa).

Residues 83-85 (HGG) carry the Involved in the stabilization of the negatively charged intermediate by the formation of the oxyanion hole motif. 4 residues coordinate (-)-2'-epi-GR24: Gly85, Gly86, Ser169, and Ser170. The active-site Nucleophile is Ser169. Active-site residues include Glu271 and His302.

This sequence belongs to the 'GDXG' lipolytic enzyme family. Expressed in axillary buds, leaves, stems, hypocotyls, flowers, siliques, and vasculatures of shoots and roots.

It localises to the nucleus. It is found in the cytoplasm. The protein localises to the cytosol. It carries out the reaction (-)-2'-epi-GR24 + H2O = (-)-2'-epi-GR24 ABC-rings + 5-hydroxy-3-methylfuran-2(5H)-one. The catalysed reaction is 5-deoxystrigol + H2O = 5-deoxystrigol ABC-rings + 5-hydroxy-3-methylfuran-2(5H)-one. It catalyses the reaction orobanchol + H2O = orobanchol ABC-rings + 5-hydroxy-3-methylfuran-2(5H)-one. In terms of biological role, binds to strigolactones (SLs) such as (-)-2'-epi-GR24(4DO), 5-deoxystrigol (5DS) and orobanchol, and catalyzes their hydrolysis; SL are phytohormones controlling shoot branching and communications between plants and microorganisms. Promotes shoot branching by dampening SL-inhibited axillary bud outgrowth. This is Strigolactones hydrolase CXE15 from Arabidopsis thaliana (Mouse-ear cress).